The following is a 408-amino-acid chain: MKIYLVGGAVRDSLLELPIKDRDYMVVGATPEQMLAQGYKQVGKDFPVFLHPKTQQEYALARTERKTAAGYGGFSVDAAPNVTLEQDLLRRDLTINAIAQDDQGNRYDPFNGIADLNARLLRHVSDAFIEDPLRVLRVARFAARFHSLGFNIAAETMALMTKISQSGELEALTAERVYIELDKSLTSDAPQVFFSVLKECGALAVLFPEIDALFGIPQPEQWHPEIDSGVHTLMVLEQAAKLSNDNAVRFASLVHDLGKALSPKASLPKHHGHGQKGLPLIKALCERFRVPNEYRDLALLVSDQHQNIHNAHELRADTIVKLFDKADFWRKPHRLEQLLLSCEADAKGRTGFELSPYPQASYIQQCFKAASNVSVKDIIDAGYKGAEIRQQLTSSRVEAVQEIKLNLE.

2 residues coordinate ATP: G8 and R11. G8 and R11 together coordinate CTP. Residues D21 and D23 each contribute to the Mg(2+) site. ATP contacts are provided by R91, R137, and R140. CTP contacts are provided by R91, R137, and R140. An HD domain is found at 228–329 (SGVHTLMVLE…VKLFDKADFW (102 aa)).

It belongs to the tRNA nucleotidyltransferase/poly(A) polymerase family. Bacterial CCA-adding enzyme type 1 subfamily. As to quaternary structure, monomer. Can also form homodimers and oligomers. Requires Mg(2+) as cofactor. Ni(2+) serves as cofactor.

The enzyme catalyses a tRNA precursor + 2 CTP + ATP = a tRNA with a 3' CCA end + 3 diphosphate. It catalyses the reaction a tRNA with a 3' CCA end + 2 CTP + ATP = a tRNA with a 3' CCACCA end + 3 diphosphate. Its function is as follows. Catalyzes the addition and repair of the essential 3'-terminal CCA sequence in tRNAs without using a nucleic acid template. Adds these three nucleotides in the order of C, C, and A to the tRNA nucleotide-73, using CTP and ATP as substrates and producing inorganic pyrophosphate. tRNA 3'-terminal CCA addition is required both for tRNA processing and repair. Also involved in tRNA surveillance by mediating tandem CCA addition to generate a CCACCA at the 3' terminus of unstable tRNAs. While stable tRNAs receive only 3'-terminal CCA, unstable tRNAs are marked with CCACCA and rapidly degraded. The chain is Multifunctional CCA protein from Shewanella piezotolerans (strain WP3 / JCM 13877).